The sequence spans 407 residues: Phosphopentomutase (407 aa).

Mn(2+)-binding residues include Asp10, Asp306, His311, Asp347, His348, and His359.

Belongs to the phosphopentomutase family. Mn(2+) is required as a cofactor.

The protein localises to the cytoplasm. It carries out the reaction 2-deoxy-alpha-D-ribose 1-phosphate = 2-deoxy-D-ribose 5-phosphate. The enzyme catalyses alpha-D-ribose 1-phosphate = D-ribose 5-phosphate. Its pathway is carbohydrate degradation; 2-deoxy-D-ribose 1-phosphate degradation; D-glyceraldehyde 3-phosphate and acetaldehyde from 2-deoxy-alpha-D-ribose 1-phosphate: step 1/2. Functionally, isomerase that catalyzes the conversion of deoxy-ribose 1-phosphate (dRib-1-P) and ribose 1-phosphate (Rib-1-P) to deoxy-ribose 5-phosphate (dRib-5-P) and ribose 5-phosphate (Rib-5-P), respectively. The sequence is that of Phosphopentomutase from Pectobacterium atrosepticum (strain SCRI 1043 / ATCC BAA-672) (Erwinia carotovora subsp. atroseptica).